The sequence spans 190 residues: Peptidyl-prolyl cis-trans isomerase A (190 aa).

The first 24 residues, 1–24 (MFKSTLAAMAAVFALSALSPAAMA), serve as a signal peptide directing secretion. The PPIase cyclophilin-type domain maps to 27 to 188 (GDPHVLLTTS…KPVVILSAKV (162 aa)).

It belongs to the cyclophilin-type PPIase family.

It is found in the periplasm. The catalysed reaction is [protein]-peptidylproline (omega=180) = [protein]-peptidylproline (omega=0). Its function is as follows. PPIases accelerate the folding of proteins. It catalyzes the cis-trans isomerization of proline imidic peptide bonds in oligopeptides. The polypeptide is Peptidyl-prolyl cis-trans isomerase A (ppiA) (Escherichia coli O157:H7).